Reading from the N-terminus, the 153-residue chain is Large ribosomal subunit protein uL15 (153 aa).

The tract at residues 1–48 (MRLNELSPAPGSKKDRKRVGRGDAGRGNYSGRGMKGQKARSGGATRPG) is disordered.

The protein belongs to the universal ribosomal protein uL15 family. Part of the 50S ribosomal subunit.

Its function is as follows. Binds to the 23S rRNA. The sequence is that of Large ribosomal subunit protein uL15 from Dehalococcoides mccartyi (strain ATCC BAA-2266 / KCTC 15142 / 195) (Dehalococcoides ethenogenes (strain 195)).